The sequence spans 516 residues: Putative Rieske 2Fe-2S iron-sulfur protein MT3926 (516 aa).

One can recognise a Rieske domain in the interval 429–516; sequence LYTFFKCLTD…RGHQLRSSRP (88 aa). 4 residues coordinate [2Fe-2S] cluster: cysteine 469, histidine 471, cysteine 489, and histidine 492.

[2Fe-2S] cluster serves as cofactor.

This is Putative Rieske 2Fe-2S iron-sulfur protein MT3926 from Mycobacterium tuberculosis (strain CDC 1551 / Oshkosh).